A 279-amino-acid chain; its full sequence is Putative carbamate hydrolase RutD (279 aa).

An AB hydrolase-1 domain is found at 23–126 (PVVVLISGLG…LVSVNGWLRI (104 aa)).

This sequence belongs to the AB hydrolase superfamily. Hydrolase RutD family.

It catalyses the reaction carbamate + 2 H(+) = NH4(+) + CO2. Functionally, involved in pyrimidine catabolism. May facilitate the hydrolysis of carbamate, a reaction that can also occur spontaneously. The polypeptide is Putative carbamate hydrolase RutD (Escherichia coli O17:K52:H18 (strain UMN026 / ExPEC)).